We begin with the raw amino-acid sequence, 628 residues long: Propionate--CoA ligase (628 aa).

It belongs to the ATP-dependent AMP-binding enzyme family.

The enzyme catalyses propanoate + ATP + CoA = propanoyl-CoA + AMP + diphosphate. It participates in organic acid metabolism; propanoate degradation. Its function is as follows. Catalyzes the synthesis of propionyl-CoA from propionate and CoA. Also converts acetate to acetyl-CoA but with a lower specific activity. The polypeptide is Propionate--CoA ligase (prpE) (Escherichia coli (strain K12)).